We begin with the raw amino-acid sequence, 185 residues long: Large ribosomal subunit protein eL19 (185 aa).

Residues 152-185 form a disordered region; sequence SDKLTSQQEARRAKNTASRAKRNEKAQIVAKVDV.

The protein belongs to the eukaryotic ribosomal protein eL19 family.

This Tetrahymena thermophila (strain SB210) protein is Large ribosomal subunit protein eL19 (RPL19).